A 406-amino-acid polypeptide reads, in one-letter code: Tyrosine--tRNA ligase (406 aa).

Tyrosine 35 lines the L-tyrosine pocket. The short motif at 40–49 is the 'HIGH' region element; that stretch reads ATSASLHIGH. The L-tyrosine site is built by tyrosine 167 and glutamine 171. The 'KMSKS' region signature appears at 227 to 231; the sequence is KMGKS. Position 230 (lysine 230) interacts with ATP. Positions 341–405 constitute an S4 RNA-binding domain; the sequence is ILLVDLMVLA…IGKKKILRIV (65 aa).

The protein belongs to the class-I aminoacyl-tRNA synthetase family. TyrS type 1 subfamily. Homodimer.

The protein resides in the cytoplasm. It catalyses the reaction tRNA(Tyr) + L-tyrosine + ATP = L-tyrosyl-tRNA(Tyr) + AMP + diphosphate + H(+). Its function is as follows. Catalyzes the attachment of tyrosine to tRNA(Tyr) in a two-step reaction: tyrosine is first activated by ATP to form Tyr-AMP and then transferred to the acceptor end of tRNA(Tyr). This is Tyrosine--tRNA ligase from Borrelia recurrentis (strain A1).